A 392-amino-acid chain; its full sequence is Probable protein phosphatase 2C 22 (392 aa).

The interval 1–26 (MEETRGISDPENGSSSYGGKPPNPLS) is disordered. The 268-residue stretch at 89–356 (RSGAWSDIGS…DNVTAVVVCL (268 aa)) folds into the PPM-type phosphatase domain. The Mn(2+) site is built by Asp133, Gly134, Asp304, and Asp347.

Belongs to the PP2C family. Requires Mg(2+) as cofactor. It depends on Mn(2+) as a cofactor.

It catalyses the reaction O-phospho-L-seryl-[protein] + H2O = L-seryl-[protein] + phosphate. The enzyme catalyses O-phospho-L-threonyl-[protein] + H2O = L-threonyl-[protein] + phosphate. The sequence is that of Probable protein phosphatase 2C 22 from Arabidopsis thaliana (Mouse-ear cress).